The chain runs to 263 residues: 4'-phosphopantetheinyl transferase pptA (263 aa).

This sequence belongs to the P-Pant transferase superfamily.

It carries out the reaction apo-[ACP] + CoA = holo-[ACP] + adenosine 3',5'-bisphosphate + H(+). Its function is as follows. Transfers the 4'-phosphopantetheine moiety from coenzyme A to a Ser of an acyl-carrier-protein. Activates the peptidyl carrier protein (PCP) domains of surfactin synthas. This Paxillus involutus (Naked brimcap) protein is 4'-phosphopantetheinyl transferase pptA (pptA).